A 73-amino-acid chain; its full sequence is Putative membrane protein insertion efficiency factor (73 aa).

The protein belongs to the UPF0161 family.

The protein localises to the cell inner membrane. Could be involved in insertion of integral membrane proteins into the membrane. The sequence is that of Putative membrane protein insertion efficiency factor from Neisseria meningitidis serogroup C (strain 053442).